Consider the following 940-residue polypeptide: Leucine--tRNA ligase, mitochondrial (940 aa).

The 'HIGH' region motif lies at 54-64; that stretch reads PYPSGALHMGH. The 'KMSKS' region signature appears at 638–642; sequence TINKL. Lys641 lines the ATP pocket. The segment at 724–744 is disordered; it reads KEQHQHQQQQHQQPLPSSEFN.

The protein belongs to the class-I aminoacyl-tRNA synthetase family.

It localises to the mitochondrion. It catalyses the reaction tRNA(Leu) + L-leucine + ATP = L-leucyl-tRNA(Leu) + AMP + diphosphate. The protein is Leucine--tRNA ligase, mitochondrial (mleuS) of Dictyostelium discoideum (Social amoeba).